The following is a 140-amino-acid chain: FAD synthase (140 aa).

Residues 9-10 (TF), 14-17 (HPGH), and D92 contribute to the ATP site.

It belongs to the archaeal FAD synthase family. Homodimer. A divalent metal cation is required as a cofactor.

It catalyses the reaction FMN + ATP + H(+) = FAD + diphosphate. It participates in cofactor biosynthesis; FAD biosynthesis; FAD from FMN: step 1/1. Catalyzes the transfer of the AMP portion of ATP to flavin mononucleotide (FMN) to produce flavin adenine dinucleotide (FAD) coenzyme. The chain is FAD synthase from Natronomonas pharaonis (strain ATCC 35678 / DSM 2160 / CIP 103997 / JCM 8858 / NBRC 14720 / NCIMB 2260 / Gabara) (Halobacterium pharaonis).